A 1151-amino-acid polypeptide reads, in one-letter code: Phospholipid-transporting ATPase NEO1 (1151 aa).

Disordered regions lie at residues 1 to 21 and 73 to 95; these read MPNP…NNNQ and LDNF…THPL. Over 1 to 184 the chain is Extracellular; that stretch reads MPNPPSFKSH…LSNAKYNAVT (184 aa). Over residues 12 to 21 the composition is skewed to polar residues; it reads QNLFNSNNNQ. A required for endosome-to-Golgi sorting region spans residues 51–104; that stretch reads EPLSKHNTVGDRESFEMRTVDDLDNFSNHSSDSHRKSSNTDTHPLMYDNRLSQD. Residue serine 102 is modified to Phosphoserine. A helical transmembrane segment spans residues 185–205; it reads FVPTLLYEQFKFFYNLYFLVV. The Cytoplasmic segment spans residues 206–209; it reads ALSQ. A helical membrane pass occupies residues 210–230; the sequence is AVPALRIGYLSSYIVPLAFVL. Residues 231–367 lie on the Extracellular side of the membrane; sequence TVTMAKEAID…TSNPLSVDNT (137 aa). The helical transmembrane segment at 368–388 threads the bilayer; that stretch reads LWANTVLASSGFCIACVVYTG. Residues 389–416 are Cytoplasmic-facing; that stretch reads RDTRQAMNTTTAKVKTGLLELEINSISK. A helical membrane pass occupies residues 417–437; that stretch reads ILCACVFALSILLVAFAGFHN. Aspartate 438 is a topological domain (extracellular). The chain crosses the membrane as a helical span at residues 439 to 459; sequence DWYIDILRYLILFSTIIPVSL. The Cytoplasmic segment spans residues 460 to 947; the sequence is RVNLDLAKSV…KLAQFVMHRG (488 aa). Catalysis depends on aspartate 503, which acts as the 4-aspartylphosphate intermediate. The ATP site is built by aspartate 503, lysine 504, and threonine 505. Residue aspartate 503 coordinates Mg(2+). Threonine 505 contacts Mg(2+). The residue at position 551 (serine 551) is a Phosphoserine. 12 residues coordinate ATP: glutamate 597, phenylalanine 640, serine 642, lysine 645, lysine 664, arginine 693, threonine 694, threonine 774, glycine 775, aspartate 776, arginine 856, and lysine 862. Residue aspartate 882 coordinates Mg(2+). Residues asparagine 885 and aspartate 886 each contribute to the ATP site. Mg(2+) is bound at residue aspartate 886. The helical transmembrane segment at 948 to 968 threads the bilayer; the sequence is LIIAICQAVYSICSLFEPIAL. Topologically, residues 969 to 970 are extracellular; that stretch reads YQ. Residues 971–991 traverse the membrane as a helical segment; the sequence is GWLMVGYATCYTMAPVFSLTL. Residues 992 to 1020 are Cytoplasmic-facing; sequence DHDIEESLTKIYPELYKELTEGKSLSYKT. The chain crosses the membrane as a helical span at residues 1021-1041; it reads FFVWVLLSLFQGSVIQLFSQA. Topologically, residues 1042–1052 are extracellular; it reads FTSLLDTDFTR. The helical transmembrane segment at 1053 to 1073 threads the bilayer; sequence MVAISFTALVVNELIMVALEI. The Cytoplasmic segment spans residues 1074-1078; that stretch reads YTWNK. A helical membrane pass occupies residues 1079-1099; it reads TMLVTEIATLLFYIVSVPFLG. At 1100–1109 the chain is on the extracellular side; that stretch reads DYFDLGYMTT. Residues 1110–1130 traverse the membrane as a helical segment; that stretch reads VNYYAGLLVILLISIFPVWTA. Over 1131-1151 the chain is Cytoplasmic; sequence KAIYRRLHPPSYAKVQEFATP. The segment at 1131-1151 is required for endosomal targeting; sequence KAIYRRLHPPSYAKVQEFATP.

It belongs to the cation transport ATPase (P-type) (TC 3.A.3) family. Type IV subfamily. As to quaternary structure, interacts with MON2. Interacts with ANY1. Functions without a CDC50/LEM3 family accessory subunit. Mg(2+) is required as a cofactor.

It is found in the endosome membrane. The protein localises to the golgi apparatus membrane. It carries out the reaction ATP + H2O + phospholipidSide 1 = ADP + phosphate + phospholipidSide 2.. It catalyses the reaction a 1,2-diacyl-sn-glycero-3-phospho-L-serine(out) + ATP + H2O = a 1,2-diacyl-sn-glycero-3-phospho-L-serine(in) + ADP + phosphate + H(+). The catalysed reaction is a 1,2-diacyl-sn-glycero-3-phosphoethanolamine(out) + ATP + H2O = a 1,2-diacyl-sn-glycero-3-phosphoethanolamine(in) + ADP + phosphate + H(+). Its function is as follows. Flippase that catalyzes the hydrolysis of ATP coupled to the transport of lysophosphatidylserine, phosphatidylethanolamine, and phosphatidylserine from the lumenal to the cytosolic leaflet of the Golgi apparatus membrane and ensures the maintenance of asymmetric distribution of phospholipids. Does not appear to transport phosphatidylcholine or sphingomyelin. May be involved in recycling from endosomes by driving the formation of SNX3-dependent recycling tubules. Required for COPI retrograde transport from the Golgi to the endoplasmic reticulum, Golgi-endosome trafficking, and Golgi-dependent protein glycosylation. In Saccharomyces cerevisiae (strain ATCC 204508 / S288c) (Baker's yeast), this protein is Phospholipid-transporting ATPase NEO1.